The chain runs to 68 residues: Protein transport protein Sec61 subunit gamma (68 aa).

At 1–32 the chain is on the cytoplasmic side; it reads MDQVTKFIEPGRQFAKDSIRLVKRCTKPDRKE. Residues 33–61 traverse the membrane as a helical segment; it reads FQKIAVATAIGFCIMGFIGFFVKLIHIPI. The Extracellular segment spans residues 62 to 68; that stretch reads NNIIVGS.

It belongs to the SecE/SEC61-gamma family. As to quaternary structure, heterotrimeric complex composed of SEC61-alpha, SEC61-beta and SEC61-gamma.

It is found in the endoplasmic reticulum membrane. In terms of biological role, necessary for protein translocation in the endoplasmic reticulum. The polypeptide is Protein transport protein Sec61 subunit gamma (SEC61G) (Gryllotalpa orientalis (Oriental mole cricket)).